Here is a 314-residue protein sequence, read N- to C-terminus: DNA-directed RNA polymerase subunit alpha (314 aa).

An alpha N-terminal domain (alpha-NTD) region spans residues 1–228 (MIEFEKPNIH…EHLGLFMDIS (228 aa)). The tract at residues 242-314 (PVAASASDSA…DMNLGFRKED (73 aa)) is alpha C-terminal domain (alpha-CTD).

The protein belongs to the RNA polymerase alpha chain family. In terms of assembly, homodimer. The RNAP catalytic core consists of 2 alpha, 1 beta, 1 beta' and 1 omega subunit. When a sigma factor is associated with the core the holoenzyme is formed, which can initiate transcription.

It carries out the reaction RNA(n) + a ribonucleoside 5'-triphosphate = RNA(n+1) + diphosphate. In terms of biological role, DNA-dependent RNA polymerase catalyzes the transcription of DNA into RNA using the four ribonucleoside triphosphates as substrates. The chain is DNA-directed RNA polymerase subunit alpha from Leuconostoc mesenteroides subsp. mesenteroides (strain ATCC 8293 / DSM 20343 / BCRC 11652 / CCM 1803 / JCM 6124 / NCDO 523 / NBRC 100496 / NCIMB 8023 / NCTC 12954 / NRRL B-1118 / 37Y).